Consider the following 479-residue polypeptide: Ribulose bisphosphate carboxylase large chain (479 aa).

Residues 1–2 (MS) constitute a propeptide that is removed on maturation. The residue at position 3 (proline 3) is an N-acetylproline. Residues threonine 65, asparagine 123, 173-177 (TIKPK), and 201-204 (KDDE) each bind substrate. Lysine 175 serves as the catalytic Proton acceptor. 3 residues coordinate Mg(2+): lysine 201, aspartate 203, and glutamate 204. The residue at position 201 (lysine 201) is an N6-carboxylysine. Serine 208 carries the post-translational modification Phosphoserine. Catalysis depends on histidine 294, which acts as the Proton acceptor. Substrate contacts are provided by residues 294–295 (HR) and histidine 327. Threonine 330 is modified (phosphothreonine). Residues lysine 334 and 379–381 (SGG) contribute to the substrate site.

This sequence belongs to the RuBisCO large chain family. Type I subfamily. As to quaternary structure, heterohexadecamer of 8 large chains and 8 small chains; disulfide-linked. The disulfide link is formed within the large subunit homodimers. Interacts with RBCX1 and RBCX1. An intermediate complex made of eight RbcL subunits interacts with the chaperone BSD2. The cofactor is Mg(2+). The disulfide bond which can form in the large chain dimeric partners within the hexadecamer appears to be associated with oxidative stress and protein turnover.

The protein resides in the plastid. It is found in the chloroplast. The enzyme catalyses 2 (2R)-3-phosphoglycerate + 2 H(+) = D-ribulose 1,5-bisphosphate + CO2 + H2O. The catalysed reaction is D-ribulose 1,5-bisphosphate + O2 = 2-phosphoglycolate + (2R)-3-phosphoglycerate + 2 H(+). Its function is as follows. RuBisCO catalyzes two reactions: the carboxylation of D-ribulose 1,5-bisphosphate, the primary event in carbon dioxide fixation, as well as the oxidative fragmentation of the pentose substrate in the photorespiration process. Both reactions occur simultaneously and in competition at the same active site. Binds to abscisic acid (ABA). The chain is Ribulose bisphosphate carboxylase large chain from Arabidopsis thaliana (Mouse-ear cress).